A 194-amino-acid chain; its full sequence is Protein LURP-one-related 10 (194 aa).

It belongs to the LOR family.

Functionally, might be related to the phospholipid scramblase and tubby-like superfamily of membrane tethered transcription factors. In Arabidopsis thaliana (Mouse-ear cress), this protein is Protein LURP-one-related 10.